The sequence spans 601 residues: Putative ankyrin repeat protein R841 (601 aa).

12 ANK repeats span residues 17–50, 54–86, 91–123, 165–197, 201–234, 238–269, 274–310, 314–349, 361–390, 397–427, 432–463, and 467–500; these read NNIT…DVNA, HGKS…DVNH, QRSV…NINY, RENI…NIDH, YGQT…NINS, KGWS…EINS, NETM…SIDN, KGYT…NINS, VCCD…DVNS, TILM…NPNI, YHKF…DPNI, and IGNN…SYNC.

This Acanthamoeba polyphaga mimivirus (APMV) protein is Putative ankyrin repeat protein R841.